Consider the following 480-residue polypeptide: UDP-N-acetylmuramate--L-alanine ligase (480 aa).

122–128 (GTHGKTT) contributes to the ATP binding site.

Belongs to the MurCDEF family.

It is found in the cytoplasm. The enzyme catalyses UDP-N-acetyl-alpha-D-muramate + L-alanine + ATP = UDP-N-acetyl-alpha-D-muramoyl-L-alanine + ADP + phosphate + H(+). It participates in cell wall biogenesis; peptidoglycan biosynthesis. Its function is as follows. Cell wall formation. This Pseudomonas paraeruginosa (strain DSM 24068 / PA7) (Pseudomonas aeruginosa (strain PA7)) protein is UDP-N-acetylmuramate--L-alanine ligase.